The following is a 349-amino-acid chain: KH domain-containing, RNA-binding, signal transduction-associated protein 2 (349 aa).

Positions 65-135 (LIPVKQYPKF…HLSDELHVLI (71 aa)) constitute a KH domain. Disordered stretches follow at residues 182-284 (EDSG…DDQT) and 319-349 (PEEW…YGRY). An omega-N-methylarginine mark is found at Arg230 and Arg240. Residues 340-349 (GYREHPYGRY) show a composition bias toward basic and acidic residues.

The protein belongs to the KHDRBS family. Self-associates to form homooligomers. Interacts with KHDRBS1/SAM68; heterooligomer formation of KHDRBS family proteins may modulate RNA substrate specificity. Interacts with RBMX. Interacts with SAFB, SFRS9 and YTHDC1. Interacts with FYN and PLCG1 (via SH3 domain). Interacts (phosphorylated) with FYN, GRB2, PLCG1 and RASA1 (via SH2 domain). Post-translationally, methylated. Tyrosine phosphorylated by FYN, PTK6 and SRC. Tyrosine phosphorylated by SRC during mitosis. Highly expressed in brain, lung, kidney and small intestine. Weakly expressed in placenta, liver, spleen, thymus, ovary and colon.

The protein localises to the nucleus. RNA-binding protein that plays a role in the regulation of alternative splicing and influences mRNA splice site selection and exon inclusion. Binds both poly(A) and poly(U) homopolymers. Phosphorylation by PTK6 inhibits its RNA-binding ability. Induces an increased concentration-dependent incorporation of exon in CD44 pre-mRNA by direct binding to purine-rich exonic enhancer. Can regulate alternative splicing of NRXN1 in the laminin G-like domain 6 containing the evolutionary conserved neurexin alternative spliced segment 4 (AS4) involved in neurexin selective targeting to postsynaptic partners. Regulates cell-type specific alternative splicing of NRXN1 at AS4 and acts synergystically with SAM68 in exon skipping. In contrast acts antagonistically with SAM68 in NRXN3 exon skipping at AS4. Its phosphorylation by FYN inhibits its ability to regulate splice site selection. May function as an adapter protein for Src kinases during mitosis. The chain is KH domain-containing, RNA-binding, signal transduction-associated protein 2 (KHDRBS2) from Homo sapiens (Human).